The following is an 826-amino-acid chain: Putative ankyrin repeat protein RBE_0220 (826 aa).

ANK repeat units lie at residues 308–337 (LGTS…DQHA), 342–371 (IDMS…DPNY), 375–404 (DNDT…DPNK), 445–474 (NDFT…DVNA), 478–507 (DGFT…NPDV), 512–541 (TKSS…NPNL), 545–574 (DGTT…DINK), and 578–607 (NGDN…DLKK).

The chain is Putative ankyrin repeat protein RBE_0220 from Rickettsia bellii (strain RML369-C).